The sequence spans 143 residues: Transcriptional regulator MraZ (143 aa).

SpoVT-AbrB domains lie at Glu5 to Glu47 and Ala76 to Thr119.

Belongs to the MraZ family. Forms oligomers.

The protein localises to the cytoplasm. It localises to the nucleoid. The sequence is that of Transcriptional regulator MraZ from Staphylococcus aureus (strain Mu3 / ATCC 700698).